We begin with the raw amino-acid sequence, 195 residues long: Large ribosomal subunit protein bL25 (195 aa).

Belongs to the bacterial ribosomal protein bL25 family. CTC subfamily. Part of the 50S ribosomal subunit; part of the 5S rRNA/L5/L18/L25 subcomplex. Contacts the 5S rRNA. Binds to the 5S rRNA independently of L5 and L18.

Functionally, this is one of the proteins that binds to the 5S RNA in the ribosome where it forms part of the central protuberance. This Chlorobium chlorochromatii (strain CaD3) protein is Large ribosomal subunit protein bL25.